The primary structure comprises 353 residues: Protein O-mannose kinase (353 aa).

Over 1–19 (MEKKAHFVKRDFPPREAPS) the chain is Cytoplasmic. A helical; Signal-anchor for type II membrane protein membrane pass occupies residues 20–40 (LLLLLLVVAVLLLNALLYLYL). The Lumenal segment spans residues 41-353 (GNLHGSSGRA…AAMPSTREML (313 aa)). Positions 83–353 (VRKLKCVGEG…AAMPSTREML (271 aa)) constitute a Protein kinase domain. 2 N-linked (GlcNAc...) asparagine glycosylation sites follow: Asn-163 and Asn-237.

The protein belongs to the protein kinase superfamily. Ser/Thr protein kinase family. STKL subfamily.

It is found in the endoplasmic reticulum membrane. It catalyses the reaction 3-O-[beta-D-GalNAc-(1-&gt;3)-beta-D-GlcNAc-(1-&gt;4)-alpha-D-Man]-L-Thr-[protein] + ATP = 3-O-[beta-D-GalNAc-(1-&gt;3)-beta-D-GlcNAc-(1-&gt;4)-(O-6-P-alpha-D-Man)]-Thr-[protein] + ADP + H(+). Its function is as follows. Protein O-mannose kinase that specifically mediates phosphorylation at the 6-position of an O-mannose of the trisaccharide (N-acetylgalactosamine (GalNAc)-beta-1,3-N-acetylglucosamine (GlcNAc)-beta-1,4-mannose) to generate phosphorylated O-mannosyl trisaccharide (N-acetylgalactosamine-beta-1,3-N-acetylglucosamine-beta-1,4-(phosphate-6-)mannose). Phosphorylated O-mannosyl trisaccharide is a carbohydrate structure present in alpha-dystroglycan (DAG1), which is required for binding laminin G-like domain-containing extracellular proteins with high affinity. Only shows kinase activity when the GalNAc-beta-3-GlcNAc-beta-terminus is linked to the 4-position of O-mannose, suggesting that this disaccharide serves as the substrate recognition motif. This chain is Protein O-mannose kinase (POMK), found in Gallus gallus (Chicken).